Consider the following 375-residue polypeptide: Digeranylgeranylglycerophospholipid reductase 1 (375 aa).

Ala-13, Glu-32, Cys-43, Ala-44, Gly-46, Arg-92, Ala-116, Asp-275, Gly-287, and Leu-288 together coordinate FAD. Gly-367 lines the a 2,3-bis-O-(geranylgeranyl)-sn-glycerol 1-phospholipid pocket.

The protein belongs to the geranylgeranyl reductase family. DGGGPL reductase subfamily. FAD is required as a cofactor.

It catalyses the reaction a 2,3-bis-O-phytanyl-sn-glycerol 1-phospholipid + 8 A = a 2,3-bis-O-(geranylgeranyl)-sn-glycerol 1-phospholipid + 8 AH2. The enzyme catalyses 2,3-bis-O-(phytanyl)-sn-glycerol 1-phosphate + 8 A = 2,3-bis-O-(geranylgeranyl)-sn-glycerol 1-phosphate + 8 AH2. The catalysed reaction is CDP-2,3-bis-O-(geranylgeranyl)-sn-glycerol + 8 AH2 = CDP-2,3-bis-O-(phytanyl)-sn-glycerol + 8 A. It carries out the reaction archaetidylserine + 8 AH2 = 2,3-bis-O-phytanyl-sn-glycero-3-phospho-L-serine + 8 A. It functions in the pathway membrane lipid metabolism; glycerophospholipid metabolism. In terms of biological role, is involved in the reduction of 2,3-digeranylgeranylglycerophospholipids (unsaturated archaeols) into 2,3-diphytanylglycerophospholipids (saturated archaeols) in the biosynthesis of archaeal membrane lipids. Catalyzes the formation of archaetidic acid (2,3-di-O-phytanyl-sn-glyceryl phosphate) from 2,3-di-O-geranylgeranylglyceryl phosphate (DGGGP) via the hydrogenation of each double bond of the isoprenoid chains. Is also probably able to reduce double bonds of geranyl groups in CDP-2,3-bis-O-(geranylgeranyl)-sn-glycerol and archaetidylserine, thus acting at various stages in the biosynthesis of archaeal membrane lipids. This is Digeranylgeranylglycerophospholipid reductase 1 from Methanopyrus kandleri (strain AV19 / DSM 6324 / JCM 9639 / NBRC 100938).